Reading from the N-terminus, the 160-residue chain is Endoribonuclease YbeY (160 aa).

Residues His-112, His-116, and His-122 each contribute to the Zn(2+) site. Residues 141–160 (ELGHPDPYACDDEEPPSKEK) are disordered.

It belongs to the endoribonuclease YbeY family. Zn(2+) serves as cofactor.

It is found in the cytoplasm. In terms of biological role, single strand-specific metallo-endoribonuclease involved in late-stage 70S ribosome quality control and in maturation of the 3' terminus of the 16S rRNA. The chain is Endoribonuclease YbeY from Pseudomonas paraeruginosa (strain DSM 24068 / PA7) (Pseudomonas aeruginosa (strain PA7)).